Consider the following 275-residue polypeptide: Sulfate transporter CysZ (275 aa).

The segment at 1-24 (MSSEKSSFPEKPPSFEKPSHSNTA) is disordered. Basic and acidic residues predominate over residues 13-24 (PSFEKPSHSNTA). 4 helical membrane passes run 49-69 (FVIL…WWLF), 93-113 (LIWP…FSTI), 169-189 (IVLL…PVLW), and 232-252 (ALVS…PVAV).

Belongs to the CysZ family.

It localises to the cell inner membrane. High affinity, high specificity proton-dependent sulfate transporter, which mediates sulfate uptake. Provides the sulfur source for the cysteine synthesis pathway. In Pectobacterium atrosepticum (strain SCRI 1043 / ATCC BAA-672) (Erwinia carotovora subsp. atroseptica), this protein is Sulfate transporter CysZ.